The primary structure comprises 417 residues: Gamma-glutamyl phosphate reductase (417 aa).

This sequence belongs to the gamma-glutamyl phosphate reductase family.

It is found in the cytoplasm. It catalyses the reaction L-glutamate 5-semialdehyde + phosphate + NADP(+) = L-glutamyl 5-phosphate + NADPH + H(+). It functions in the pathway amino-acid biosynthesis; L-proline biosynthesis; L-glutamate 5-semialdehyde from L-glutamate: step 2/2. Catalyzes the NADPH-dependent reduction of L-glutamate 5-phosphate into L-glutamate 5-semialdehyde and phosphate. The product spontaneously undergoes cyclization to form 1-pyrroline-5-carboxylate. This Serratia proteamaculans (strain 568) protein is Gamma-glutamyl phosphate reductase.